The following is a 141-amino-acid chain: Large ribosomal subunit protein uL11 (141 aa).

This sequence belongs to the universal ribosomal protein uL11 family. As to quaternary structure, part of the ribosomal stalk of the 50S ribosomal subunit. Interacts with L10 and the large rRNA to form the base of the stalk. L10 forms an elongated spine to which L12 dimers bind in a sequential fashion forming a multimeric L10(L12)X complex. Post-translationally, one or more lysine residues are methylated.

Forms part of the ribosomal stalk which helps the ribosome interact with GTP-bound translation factors. The sequence is that of Large ribosomal subunit protein uL11 from Alkaliphilus oremlandii (strain OhILAs) (Clostridium oremlandii (strain OhILAs)).